The chain runs to 393 residues: Bifunctional enzyme IspD/IspF (393 aa).

A 2-C-methyl-D-erythritol 4-phosphate cytidylyltransferase region spans residues 1 to 234 (MTTSQRTAAI…ARLAASLGDI (234 aa)). The 2-C-methyl-D-erythritol 2,4-cyclodiphosphate synthase stretch occupies residues 235–393 (RTGTGYDVHA…SATIRLPWGA (159 aa)). Residues Asp241 and His243 each coordinate a divalent metal cation. 4-CDP-2-C-methyl-D-erythritol 2-phosphate is bound by residues 241 to 243 (DVH) and 267 to 268 (HS). His275 lines the a divalent metal cation pocket. Residues 289–291 (DIG), 365–368 (TTSE), Phe372, and Arg375 each bind 4-CDP-2-C-methyl-D-erythritol 2-phosphate.

In the N-terminal section; belongs to the IspD/TarI cytidylyltransferase family. IspD subfamily. The protein in the C-terminal section; belongs to the IspF family. Requires a divalent metal cation as cofactor.

The catalysed reaction is 2-C-methyl-D-erythritol 4-phosphate + CTP + H(+) = 4-CDP-2-C-methyl-D-erythritol + diphosphate. The enzyme catalyses 4-CDP-2-C-methyl-D-erythritol 2-phosphate = 2-C-methyl-D-erythritol 2,4-cyclic diphosphate + CMP. It functions in the pathway isoprenoid biosynthesis; isopentenyl diphosphate biosynthesis via DXP pathway; isopentenyl diphosphate from 1-deoxy-D-xylulose 5-phosphate: step 2/6. Its pathway is isoprenoid biosynthesis; isopentenyl diphosphate biosynthesis via DXP pathway; isopentenyl diphosphate from 1-deoxy-D-xylulose 5-phosphate: step 4/6. Bifunctional enzyme that catalyzes the formation of 4-diphosphocytidyl-2-C-methyl-D-erythritol from CTP and 2-C-methyl-D-erythritol 4-phosphate (MEP) (IspD), and catalyzes the conversion of 4-diphosphocytidyl-2-C-methyl-D-erythritol 2-phosphate (CDP-ME2P) to 2-C-methyl-D-erythritol 2,4-cyclodiphosphate (ME-CPP) with a corresponding release of cytidine 5-monophosphate (CMP) (IspF). The polypeptide is Bifunctional enzyme IspD/IspF (Bradyrhizobium sp. (strain ORS 278)).